Consider the following 344-residue polypeptide: Late embryogenesis abundant protein 17 (344 aa).

Disordered stretches follow at residues M1–A20 and K116–G258. The stretch at S3–R52 forms a coiled coil. Basic and acidic residues-rich tracts occupy residues K116–V163, E172–K230, and D238–D252.

This sequence belongs to the LEA type 4 family. Expressed in embryos.

The protein localises to the nucleus. Its function is as follows. Involved in abiotic stress responses. May function as chaperone and contribute to prevent the formation of damaging protein aggregates. In Oryza sativa subsp. japonica (Rice), this protein is Late embryogenesis abundant protein 17.